A 416-amino-acid chain; its full sequence is MDYREFFSQFKYLSEKPGIGGRIKAQPEDFIVMEEPLRSAFDGKKYAIFLLKKRNWDTMAAVKEIAKRAGISYKDIGFAGTKDRHAVTYQYISVPRDAKEKVEAVRIKDIELRFVSYGRALKLGHLLGNRFKIIVRDVDESAFERTKEIVRELRSKGGFPNYFGYQRFGERRVTNHLIGKLLLKGDFEGAARLFLGAHGGGMEGDEARKNFWETGDVNRALEEFPGFLRYERAMLYRYKETGSWRKAFLSLPLPIMRIFIHAYQSYLFNLYISRRIEEGLPLNEALVGDIVVQIKGGIPYRDRTYRVTETNIDFVKEKIRKDEAMVSGPLFGFSMRRARGVPGRLEEELLAEENLSLKDFKRLPKPMAEPGGRRELLIRPLGLTYGYVPSVGMCFRFFLPKGVYATSVLREIMKDH.

Residue Asp83 is the Nucleophile of the active site. One can recognise a TRUD domain in the interval Gly158 to Arg379.

The protein belongs to the pseudouridine synthase TruD family.

It carries out the reaction uridine(13) in tRNA = pseudouridine(13) in tRNA. Functionally, could be responsible for synthesis of pseudouridine from uracil-13 in transfer RNAs. This is Probable tRNA pseudouridine synthase D from Thermococcus onnurineus (strain NA1).